The sequence spans 298 residues: Nucleotide-binding protein Csal_2229 (298 aa).

8–15 (GRSGSGKS) provides a ligand contact to ATP. Position 59–62 (59–62 (DARN)) interacts with GTP.

The protein belongs to the RapZ-like family.

Displays ATPase and GTPase activities. The polypeptide is Nucleotide-binding protein Csal_2229 (Chromohalobacter salexigens (strain ATCC BAA-138 / DSM 3043 / CIP 106854 / NCIMB 13768 / 1H11)).